Reading from the N-terminus, the 293-residue chain is Formamidopyrimidine-DNA glycosylase (293 aa).

Pro-2 functions as the Schiff-base intermediate with DNA in the catalytic mechanism. Residue Glu-3 is the Proton donor of the active site. Lys-61 serves as the catalytic Proton donor; for beta-elimination activity. The DNA site is built by His-104, Arg-123, and Lys-169. An FPG-type zinc finger spans residues 255–289; sequence DAYGREGEPCRRCGAIMRRDKFMNRSSFYCPRCQP. Arg-279 acts as the Proton donor; for delta-elimination activity in catalysis.

Belongs to the FPG family. As to quaternary structure, monomer. The cofactor is Zn(2+).

The catalysed reaction is Hydrolysis of DNA containing ring-opened 7-methylguanine residues, releasing 2,6-diamino-4-hydroxy-5-(N-methyl)formamidopyrimidine.. It carries out the reaction 2'-deoxyribonucleotide-(2'-deoxyribose 5'-phosphate)-2'-deoxyribonucleotide-DNA = a 3'-end 2'-deoxyribonucleotide-(2,3-dehydro-2,3-deoxyribose 5'-phosphate)-DNA + a 5'-end 5'-phospho-2'-deoxyribonucleoside-DNA + H(+). In terms of biological role, involved in base excision repair of DNA damaged by oxidation or by mutagenic agents. Acts as a DNA glycosylase that recognizes and removes damaged bases. Has a preference for oxidized purines, such as 7,8-dihydro-8-oxoguanine (8-oxoG). Has AP (apurinic/apyrimidinic) lyase activity and introduces nicks in the DNA strand. Cleaves the DNA backbone by beta-delta elimination to generate a single-strand break at the site of the removed base with both 3'- and 5'-phosphates. The sequence is that of Formamidopyrimidine-DNA glycosylase from Mycolicibacterium vanbaalenii (strain DSM 7251 / JCM 13017 / BCRC 16820 / KCTC 9966 / NRRL B-24157 / PYR-1) (Mycobacterium vanbaalenii).